The chain runs to 396 residues: Aspartate aminotransferase (396 aa).

3 residues coordinate L-aspartate: Gly-34, Trp-130, and Asn-183. Residue Lys-246 is modified to N6-(pyridoxal phosphate)lysine. Arg-374 is an L-aspartate binding site.

Belongs to the class-I pyridoxal-phosphate-dependent aminotransferase family. As to quaternary structure, homodimer. Pyridoxal 5'-phosphate is required as a cofactor.

It is found in the cytoplasm. The enzyme catalyses L-aspartate + 2-oxoglutarate = oxaloacetate + L-glutamate. This Escherichia coli (strain K12) protein is Aspartate aminotransferase (aspC).